A 543-amino-acid chain; its full sequence is NXPE family member 4 (543 aa).

An N-terminal signal peptide occupies residues 1–26; the sequence is MKTLASRKSLWMLLFIVIFWVSFTVF. 3 N-linked (GlcNAc...) asparagine glycosylation sites follow: Asn-91, Asn-159, and Asn-223.

The protein belongs to the NXPE family.

The protein localises to the secreted. The protein is NXPE family member 4 (Nxpe4) of Mus musculus (Mouse).